We begin with the raw amino-acid sequence, 451 residues long: Tubulin gamma-2 chain (451 aa).

Ser131 is subject to Phosphoserine; by BRSK1. A GTP-binding site is contributed by 142 to 148 (AGGTGSG).

The protein belongs to the tubulin family. As to quaternary structure, component of the gamma-tubulin ring complex (gTuRC) consisting of TUBGCP2, TUBGCP3, TUBGCP4, TUBGCP5 and TUBGCP6 and gamma-tubulin TUBG1 or TUBG2. TUBGCP2, TUBGCP3, TUBGCP4, TUBGCP5 and TUBGCP6 assemble in a 5:5:2:1:1 stoichiometry; each is associated with a gamma-tubulin, thereby arranging 14 gamma-tubulins in a helical manner. Gamma-tubulin at the first position is blocked by TUBGCP3 at the last position, allowing 13 protafilaments to grow into a microtubule. Interacts with alpha-beta tubulin heterodimers; the interaction allows microtubules to nucleate from the gTuRC. In terms of processing, phosphorylation at Ser-131 by BRSK1 regulates centrosome duplication, possibly by mediating relocation of gamma-tubulin and its associated proteins from the cytoplasm to the centrosome.

The protein localises to the cytoplasm. It localises to the cytoskeleton. It is found in the microtubule organizing center. Its subcellular location is the centrosome. Tubulin is the major constituent of microtubules, protein filaments consisting of alpha- and beta-tubulin heterodimers. Gamma-tubulin is a key component of the gamma-tubulin ring complex (gTuRC) which mediates microtubule nucleation. The gTuRC regulates the minus-end nucleation of alpha-beta tubulin heterodimers that grow into microtubule protafilaments, a critical step in centrosome duplication and spindle formation. The sequence is that of Tubulin gamma-2 chain (TUBG2) from Bos taurus (Bovine).